The following is a 142-amino-acid chain: 5a,11a-dehydrotetracycline/5a,11a-dehydrooxytetracycline reductase (142 aa).

This sequence belongs to the pyridoxamine 5'-phosphate oxidase family.

It carries out the reaction tetracycline + oxidized coenzyme F420-(gamma-L-Glu)(n) + H(+) = 5a,11a-dehydrotetracycline + reduced coenzyme F420-(gamma-L-Glu)(n). The enzyme catalyses oxytetracycline + oxidized coenzyme F420-(gamma-L-Glu)(n) + H(+) = 5a,11a-dehydrooxytetracycline + reduced coenzyme F420-(gamma-L-Glu)(n). It participates in antibiotic biosynthesis; oxytetracycline biosynthesis. Its function is as follows. Involved in the biosynthesis of the antibiotics tetracycline and oxytetracycline. Catalyzes the C(5) reduction of 5a,11a-dehydrooxytetracycline to yield oxytetracycline as a major product. Also catalyzes the C(12) reduction of 5a,11a-dehydrotetracycline (12-dehydrotetracycline) to produce tetracycline as a minor product. This chain is 5a,11a-dehydrotetracycline/5a,11a-dehydrooxytetracycline reductase, found in Streptomyces rimosus subsp. rimosus (strain ATCC 10970 / DSM 40260 / JCM 4667 / NRRL 2234).